Here is a 132-residue protein sequence, read N- to C-terminus: Fatty acid-binding protein, intestinal (132 aa).

Ala-2 carries the post-translational modification N-acetylalanine. Residues Trp-83 and Arg-107 each contribute to the hexadecanoate site. Tetradecanoate contacts are provided by Trp-83 and Arg-107.

It belongs to the calycin superfamily. Fatty-acid binding protein (FABP) family. As to expression, expressed in the small intestine. Highest expression levels in the proximal ileum.

It localises to the cytoplasm. In terms of biological role, FABPs are thought to play a role in the intracellular transport of long-chain fatty acids and their acyl-CoA esters. FABP2 is probably involved in triglyceride-rich lipoprotein synthesis. Binds saturated long-chain fatty acids with a high affinity, but binds with a lower affinity to unsaturated long-chain fatty acids. FABP2 may also help maintain energy homeostasis by functioning as a lipid sensor. This chain is Fatty acid-binding protein, intestinal (Fabp2), found in Mus musculus (Mouse).